The chain runs to 203 residues: Probable metallo-hydrolase MJ0296 (203 aa).

The Zn(2+) site is built by His86, His88, Asp90, His91, His135, Asp152, and His193.

Belongs to the metallo-beta-lactamase superfamily. It depends on Zn(2+) as a cofactor.

The polypeptide is Probable metallo-hydrolase MJ0296 (Methanocaldococcus jannaschii (strain ATCC 43067 / DSM 2661 / JAL-1 / JCM 10045 / NBRC 100440) (Methanococcus jannaschii)).